Consider the following 199-residue polypeptide: Protein GrpE (199 aa).

The segment at 1-40 is disordered; the sequence is MEKKKHGTNSISEALKVKAAVEQETATPEPTPQSETESAD. Residues 24 to 36 are compositionally biased toward polar residues; sequence ETATPEPTPQSET.

It belongs to the GrpE family. In terms of assembly, homodimer.

The protein localises to the cytoplasm. Functionally, participates actively in the response to hyperosmotic and heat shock by preventing the aggregation of stress-denatured proteins, in association with DnaK and GrpE. It is the nucleotide exchange factor for DnaK and may function as a thermosensor. Unfolded proteins bind initially to DnaJ; upon interaction with the DnaJ-bound protein, DnaK hydrolyzes its bound ATP, resulting in the formation of a stable complex. GrpE releases ADP from DnaK; ATP binding to DnaK triggers the release of the substrate protein, thus completing the reaction cycle. Several rounds of ATP-dependent interactions between DnaJ, DnaK and GrpE are required for fully efficient folding. This is Protein GrpE from Geotalea uraniireducens (strain Rf4) (Geobacter uraniireducens).